The chain runs to 332 residues: Ketol-acid reductoisomerase (NADP(+)) 1 (332 aa).

The KARI N-terminal Rossmann domain occupies 2 to 182 (AELFYDADAD…GGTRAGVIKT (181 aa)). NADP(+) is bound by residues 25 to 28 (YGSQ), S51, S53, and 83 to 86 (DPIQ). H108 is an active-site residue. G134 lines the NADP(+) pocket. The region spanning 183–328 (TFTEETETDL…KELRKLMSWV (146 aa)) is the KARI C-terminal knotted domain. Mg(2+)-binding residues include D191, E195, E227, and E231. S252 serves as a coordination point for substrate.

Belongs to the ketol-acid reductoisomerase family. Requires Mg(2+) as cofactor.

The catalysed reaction is (2R)-2,3-dihydroxy-3-methylbutanoate + NADP(+) = (2S)-2-acetolactate + NADPH + H(+). It catalyses the reaction (2R,3R)-2,3-dihydroxy-3-methylpentanoate + NADP(+) = (S)-2-ethyl-2-hydroxy-3-oxobutanoate + NADPH + H(+). It participates in amino-acid biosynthesis; L-isoleucine biosynthesis; L-isoleucine from 2-oxobutanoate: step 2/4. Its pathway is amino-acid biosynthesis; L-valine biosynthesis; L-valine from pyruvate: step 2/4. Involved in the biosynthesis of branched-chain amino acids (BCAA). Catalyzes an alkyl-migration followed by a ketol-acid reduction of (S)-2-acetolactate (S2AL) to yield (R)-2,3-dihydroxy-isovalerate. In the isomerase reaction, S2AL is rearranged via a Mg-dependent methyl migration to produce 3-hydroxy-3-methyl-2-ketobutyrate (HMKB). In the reductase reaction, this 2-ketoacid undergoes a metal-dependent reduction by NADPH to yield (R)-2,3-dihydroxy-isovalerate. The sequence is that of Ketol-acid reductoisomerase (NADP(+)) 1 from Streptomyces coelicolor (strain ATCC BAA-471 / A3(2) / M145).